The following is a 352-amino-acid chain: Spermidine/putrescine import ATP-binding protein PotA (352 aa).

One can recognise an ABC transporter domain in the interval 7–237 (IELKNVSKKY…PKNKFVANFI (231 aa)). An ATP-binding site is contributed by 39 to 46 (GPSGCGKT).

Belongs to the ABC transporter superfamily. Spermidine/putrescine importer (TC 3.A.1.11.1) family. The complex is composed of two ATP-binding proteins (PotA), two transmembrane proteins (PotB and PotC) and a solute-binding protein (PotD).

Its subcellular location is the cell membrane. The enzyme catalyses ATP + H2O + polyamine-[polyamine-binding protein]Side 1 = ADP + phosphate + polyamineSide 2 + [polyamine-binding protein]Side 1.. Part of the ABC transporter complex PotABCD involved in spermidine/putrescine import. Responsible for energy coupling to the transport system. The sequence is that of Spermidine/putrescine import ATP-binding protein PotA from Clostridium acetobutylicum (strain ATCC 824 / DSM 792 / JCM 1419 / IAM 19013 / LMG 5710 / NBRC 13948 / NRRL B-527 / VKM B-1787 / 2291 / W).